The sequence spans 1336 residues: MVSCWDTAVLPCALLGCLLLTGYCSGSKLKGPELSLKGTQHVMQAGQTLFLKCRGEAAHSWSLPTTVSQEDKKLSVTRSACGRNNRQFCSTLTLNMAQANHTGLYSCRYLPKSTSKEKKMESAIYIFVSDAGSPFIEMHSDIPKLVHMTEGRELIIPCRVTSPNITVTLKKFPFDALTPDGQRIAWDSRRGFIIANATYKEIGLLTCEATVNGHLYQTSYLTHRQTNTILDVQISPPSPVRFLRGQTLVLNCTVTTDLNTRVQMSWNYPGKATKRASIRQRIDQSNPHSNVFHSVLKINNVESRDKGLYTCRVKSGSSFRTFNTSVHVYEKGFISVKHRKQQVQETIAGKRSHRLSMKVKAFPSPEVVWLKDGVPATEKSARYSVHGYSLIIKDVTAEDAGDYTILLGIKQSKLFRNLTATLIVNVKPQIYEKSVSSLPSPPLYPLGSRQVLTCTVYGIPQPTIKWLWHPCHYNHSKERNDFCFGSEESFILDSSSNIGNRIEGITQRMMVIEGTNKTVSTLVVADSRTPGSYSCKAFNKIGTVERDIRFYVTDVPNGFHVSLEKIPTEGEDLKLSCVVSKFLYRDITWILLRTVNNRTMHHSISKQKMATTQDYSITLNLVIKNVSLEDSGTYACRARNIYTGEEILRKTEVLVRDLEAPLLLQNLSDHEVSISGSTTLDCQARGVPAPQITWFKNNHKIQQEPGIILGPGNSTLFIERVTEEDEGVYRCRATNQKGVVESSAYLTVQGTSDKSNLELITLTCTCVAATLFWLLLTLFIRKLKRSSSEVKTDYLSIIMDPDEVPLDEQCERLPYDASKWEFARERLKLGKSLGRGAFGKVVQASAFGIKKSPTCRTVAVKMLKEGATASEYKALMTELKILTHIGHHLNVVNLLGACTKQGGPLMVIVEYCKYGNLSNYLKSKRDFFCLNKDAALHMEPKKEKLEPDLEQDQKPRLDSVSSSESFTSSGFQEDKSVSDVEGGEDYSEISKQPLTMEDLISYSFQVARGMEFLSSRKCIHRDLAARNILLSENNVVKICDFGLARDIYKNPDYVRRGDTRLPLKWMAPESIFDKVYSTKSDVWSYGVLLWEIFSLGGSPYPGVQMDEDFCSRLKEGMRMRTPEYATPEIYQIMLDCWHKDPKERPRFAELVEKLGDLLQANVQQDGKDYIPLNAILTRNSGFTYSVPTFSEDFFKDGFTDPKFHSGSSDDVRYVNAFKFMSLERIKTFEELSPNATSMFEDYHLDTSSLLTSPLLKRFTWTETKPKASMKIDLRITSKSKEAGLSDLPGPSFCFSSCGHIRPVRQEDEDDPELGKESCCSPPPDYNSVVLYSSPPA.

The first 22 residues, 1-22 (MVSCWDTAVLPCALLGCLLLTG), serve as a signal peptide directing secretion. Residues 23–758 (YCSGSKLKGP…QGTSDKSNLE (736 aa)) are Extracellular-facing. Ig-like C2-type domains lie at 32-121 (PELS…KKME), 151-214 (GREL…VNGH), 230-327 (LDVQ…TSVH), 335-421 (SVKH…LTAT), 429-549 (QIYE…RDIR), 556-655 (PNGF…EVLV), and 661-747 (PLLL…AYLT). 2 disulfides stabilise this stretch: Cys-53/Cys-107 and Cys-158/Cys-207. N-linked (GlcNAc...) asparagine glycans are attached at residues Asn-100, Asn-164, Asn-196, and Asn-251. Cysteines 252 and 311 form a disulfide. N-linked (GlcNAc...) asparagine glycosylation is found at Asn-323, Asn-417, Asn-474, Asn-516, Asn-597, Asn-625, Asn-666, and Asn-713. 2 disulfides stabilise this stretch: Cys-454/Cys-535 and Cys-577/Cys-636. Cysteines 682 and 731 form a disulfide. Residues 759-780 (LITLTCTCVAATLFWLLLTLFI) traverse the membrane as a helical segment. Topologically, residues 781–1336 (RKLKRSSSEV…SVVLYSSPPA (556 aa)) are cytoplasmic. The 332-residue stretch at 827-1158 (LKLGKSLGRG…ELVEKLGDLL (332 aa)) folds into the Protein kinase domain. ATP contacts are provided by residues 833-841 (LGRGAFGKV) and Lys-861. Tyr-914 carries the phosphotyrosine; by autocatalysis modification. The segment covering 941–957 (KKEKLEPDLEQDQKPRL) has biased composition (basic and acidic residues). Residues 941-982 (KKEKLEPDLEQDQKPRLDSVSSSESFTSSGFQEDKSVSDVEG) are disordered. The segment covering 959-969 (SVSSSESFTSS) has biased composition (low complexity). Asp-1022 acts as the Proton acceptor in catalysis. Tyr-1053, Tyr-1169, Tyr-1213, Tyr-1242, Tyr-1325, and Tyr-1331 each carry phosphotyrosine; by autocatalysis. The disordered stretch occupies residues 1304-1326 (RQEDEDDPELGKESCCSPPPDYN).

Belongs to the protein kinase superfamily. Tyr protein kinase family. CSF-1/PDGF receptor subfamily. In terms of assembly, interacts with VEGFA, VEGFB and PGF. Monomer in the absence of bound VEGFA, VEGFB or PGF. Homodimer in the presence of bound VEGFA, VEGFB and PGF. Can also form a heterodimer with KDR. Interacts (tyrosine phosphorylated) with CBL, CRK, GRB2, NCK1, PIK3R1, PLCG, PSEN1 and PTPN11. Probably interacts with PTPRB. Interacts with RACK1. Identified in a complex with CBL and CD2AP. In terms of processing, N-glycosylated. Post-translationally, ubiquitinated after VEGFA-mediated autophosphorylation, leading to proteolytic degradation. Autophosphorylated on tyrosine residues upon ligand binding. Autophosphorylation occurs in trans, i.e. one subunit of the dimeric receptor phosphorylates tyrosine residues on the other subunit. Phosphorylation at Tyr-1169 is important for interaction with PLCG. Phosphorylation at Tyr-1213 is important for interaction with PIK3R1, PTPN11, GRB2, and PLCG. Phosphorylation at Tyr-1331 is important for endocytosis and for interaction with CBL, NCK1 and CRK. Is probably dephosphorylated by PTPRB.

It localises to the cell membrane. The protein resides in the endosome. It carries out the reaction L-tyrosyl-[protein] + ATP = O-phospho-L-tyrosyl-[protein] + ADP + H(+). Present in an inactive conformation in the absence of bound ligand. Binding of VEGFA, VEGFB or PGF leads to dimerization and activation by autophosphorylation on tyrosine residues. Its function is as follows. Tyrosine-protein kinase that acts as a cell-surface receptor for VEGFA, VEGFB and PGF, and plays an essential role in the development of embryonic vasculature, the regulation of angiogenesis, cell survival, cell migration, macrophage function, chemotaxis, and cancer cell invasion. Acts as a positive regulator of postnatal retinal hyaloid vessel regression. May play an essential role as a negative regulator of embryonic angiogenesis by inhibiting excessive proliferation of endothelial cells. Can promote endothelial cell proliferation, survival and angiogenesis in adulthood. Its function in promoting cell proliferation seems to be cell-type specific. Promotes PGF-mediated proliferation of endothelial cells, and proliferation of some types of cancer cells, but does not promote proliferation of normal fibroblasts. Has very high affinity for VEGFA and relatively low protein kinase activity; may function as a negative regulator of VEGFA signaling by limiting the amount of free VEGFA and preventing its binding to KDR. Modulates KDR signaling by forming heterodimers with KDR. Ligand binding leads to the activation of several signaling cascades. Activation of PLCG leads to the production of the cellular signaling molecules diacylglycerol and inositol 1,4,5-trisphosphate and the activation of protein kinase C. Mediates phosphorylation of PIK3R1, the regulatory subunit of phosphatidylinositol 3-kinase, leading to the activation of phosphatidylinositol kinase and the downstream signaling pathway. Mediates activation of MAPK1/ERK2, MAPK3/ERK1 and the MAP kinase signaling pathway, as well as of the AKT1 signaling pathway. Phosphorylates SRC, YES1 and PLCG, and may also phosphorylate CBL. Promotes phosphorylation of AKT1 and PTK2/FAK1. This Rattus norvegicus (Rat) protein is Vascular endothelial growth factor receptor 1 (Flt1).